Here is a 294-residue protein sequence, read N- to C-terminus: MKLIIVSGRSGSGKSTALHVLEDLGFYCIDNLPIGLLFPLTREAATQEAPGRLKKMAVSIDARNLSAELANFETIYQQLKQTGVELEIIFLDADEQSLLQRFHATRRKHPLSDDKTSLREAITNEKQLLEPLSKLADLYVNTTGLSMYELRDMIKQRVAGRKDQELALLFQSFGFKHGVPVDSDYVFDVRCLPNPYWDTSLRKHTGVDQPVIDFLEREPLTRQMVDDLTGFLNTWLPSFADSNRSYMTISIGCTGGQHRSVYVCEQLGRYFRDNYRNVQVRHTELPHLQARGEI.

ATP is bound at residue 8-15 (GRSGSGKS). 61–64 (DARN) is a GTP binding site.

This sequence belongs to the RapZ-like family.

Displays ATPase and GTPase activities. This Marinobacter nauticus (strain ATCC 700491 / DSM 11845 / VT8) (Marinobacter aquaeolei) protein is Nucleotide-binding protein Maqu_2718.